The following is a 295-amino-acid chain: Protein shisa-2 homolog (295 aa).

An N-terminal signal peptide occupies residues 1-33 (MWGARRSSVSSSWNAASLLQLLLAALLAAGARA). Topologically, residues 34–110 (SGEYCHGWLD…RADKDGPDGS (77 aa)) are extracellular. The segment at 87–108 (GCDNDRQQGAGEPGRADKDGPD) is disordered. A helical transmembrane segment spans residues 111-131 (AVPIYVPFLIVGSVFVAFIIL). At 132–295 (GSLVAACCCR…EQKMYPAVTV (164 aa)) the chain is on the cytoplasmic side. The segment at 168-205 (PSASTSRGSSSRQSSTAASSSSSANSGARAPPTRSQTN) is disordered. Residues 169 to 197 (SASTSRGSSSRQSSTAASSSSSANSGARA) are compositionally biased toward low complexity.

The protein belongs to the shisa family.

Its subcellular location is the endoplasmic reticulum membrane. Plays an essential role in the maturation of presomitic mesoderm cells by individual attenuation of both FGF and WNT signaling. The protein is Protein shisa-2 homolog (SHISA2) of Homo sapiens (Human).